Consider the following 273-residue polypeptide: Endoplasmic reticulum resident protein 27 (273 aa).

Positions 1–25 are cleaved as a signal peptide; it reads MEAAPSRFMFLLFLLTCELAAEVAA. The Thioredoxin domain occupies 39–152; the sequence is EPTWLTDVPA…MVTEYNPVTV (114 aa). Asn100 carries N-linked (GlcNAc...) asparagine glycosylation. The interval 230–233 is PDIA3-binding site; sequence DEWD. Positions 270 to 273 match the Prevents secretion from ER motif; it reads KVEL.

This sequence belongs to the protein disulfide isomerase family. In terms of assembly, interacts with PDIA3.

Its subcellular location is the endoplasmic reticulum lumen. Its function is as follows. Specifically binds unfolded proteins and may recruit protein disulfide isomerase PDIA3 to unfolded substrates. Binds protein substrates via a hydrophobic pocket in the C-terminal domain. May play a role in the unfolded stress response. This chain is Endoplasmic reticulum resident protein 27 (ERP27), found in Homo sapiens (Human).